We begin with the raw amino-acid sequence, 501 residues long: Armadillo repeat-containing protein 6 (501 aa).

Serine 64 is subject to Phosphoserine. ARM repeat units lie at residues 220-264, 274-318, 319-369, and 370-412; these read GVLP…HAHN, KGLK…DLGG, LSIL…RAGG, and TESI…VEGG. Position 263 is a pros-methylhistidine (histidine 263).

Belongs to the ARMC6 family. Methylated at His-263 by METTL9.

This is Armadillo repeat-containing protein 6 (ARMC6) from Pongo abelii (Sumatran orangutan).